The primary structure comprises 548 residues: Chaperonin GroEL (548 aa).

Residues 30–33, lysine 51, 87–91, glycine 415, 479–481, and aspartate 495 contribute to the ATP site; these read TLGP, DGTTT, and NAA.

Belongs to the chaperonin (HSP60) family. As to quaternary structure, forms a cylinder of 14 subunits composed of two heptameric rings stacked back-to-back. Interacts with the co-chaperonin GroES.

The protein localises to the cytoplasm. The enzyme catalyses ATP + H2O + a folded polypeptide = ADP + phosphate + an unfolded polypeptide.. Its function is as follows. Together with its co-chaperonin GroES, plays an essential role in assisting protein folding. The GroEL-GroES system forms a nano-cage that allows encapsulation of the non-native substrate proteins and provides a physical environment optimized to promote and accelerate protein folding. This Pseudomonas fluorescens (strain SBW25) protein is Chaperonin GroEL.